The chain runs to 259 residues: Thiazole synthase (259 aa).

Lys-95 serves as the catalytic Schiff-base intermediate with DXP. 1-deoxy-D-xylulose 5-phosphate contacts are provided by residues Gly-156, 182–183 (AG), and 204–205 (NT).

It belongs to the ThiG family. Homotetramer. Forms heterodimers with either ThiH or ThiS.

Its subcellular location is the cytoplasm. It catalyses the reaction [ThiS sulfur-carrier protein]-C-terminal-Gly-aminoethanethioate + 2-iminoacetate + 1-deoxy-D-xylulose 5-phosphate = [ThiS sulfur-carrier protein]-C-terminal Gly-Gly + 2-[(2R,5Z)-2-carboxy-4-methylthiazol-5(2H)-ylidene]ethyl phosphate + 2 H2O + H(+). Its pathway is cofactor biosynthesis; thiamine diphosphate biosynthesis. In terms of biological role, catalyzes the rearrangement of 1-deoxy-D-xylulose 5-phosphate (DXP) to produce the thiazole phosphate moiety of thiamine. Sulfur is provided by the thiocarboxylate moiety of the carrier protein ThiS. In vitro, sulfur can be provided by H(2)S. This chain is Thiazole synthase, found in Serratia proteamaculans (strain 568).